The sequence spans 278 residues: MNRITAYIRQSLQDIYPPEEVKALSMLICCDMLGVDALDIYMGKDIILSACKQRELENIIFRLQKNEPIQYIRGYAEFCGRNFRVAPGVLIPRPETAELVDLIVKENPDARRLLDIGTGSGCIAISLDKNLPDAKVDAWDISEEALAIARKNNEELDAQVTFRRQDVFSADGIQGTSYDIIVSNPPYVTETEKTEMEANVLDWEPELALFVPDEDPLRFYRRIAELGRELLRPGGKLYFEINQAYGQDMIRMIEMNQYRDVRVIKDIFGKDRILTANR.

Residues 117 to 121 (GTGSG), aspartate 140, and asparagine 184 contribute to the S-adenosyl-L-methionine site. Residue 184–187 (NPPY) coordinates substrate.

It belongs to the protein N5-glutamine methyltransferase family. PrmC subfamily.

The enzyme catalyses L-glutaminyl-[peptide chain release factor] + S-adenosyl-L-methionine = N(5)-methyl-L-glutaminyl-[peptide chain release factor] + S-adenosyl-L-homocysteine + H(+). Its function is as follows. Methylates the class 1 translation termination release factors RF1/PrfA and RF2/PrfB on the glutamine residue of the universally conserved GGQ motif. The polypeptide is Release factor glutamine methyltransferase (Bacteroides thetaiotaomicron (strain ATCC 29148 / DSM 2079 / JCM 5827 / CCUG 10774 / NCTC 10582 / VPI-5482 / E50)).